We begin with the raw amino-acid sequence, 608 residues long: UvrABC system protein C (608 aa).

A GIY-YIG domain is found at 16-94 (NRPGVYRMFD…IKEWRPPYNI (79 aa)). In terms of domain architecture, UVR spans 204-239 (NALADELNVGMEQAAMRLDFEKAAELRDQVAILRRV).

Belongs to the UvrC family. In terms of assembly, interacts with UvrB in an incision complex.

It localises to the cytoplasm. Functionally, the UvrABC repair system catalyzes the recognition and processing of DNA lesions. UvrC both incises the 5' and 3' sides of the lesion. The N-terminal half is responsible for the 3' incision and the C-terminal half is responsible for the 5' incision. This is UvrABC system protein C from Pseudomonas aeruginosa (strain ATCC 15692 / DSM 22644 / CIP 104116 / JCM 14847 / LMG 12228 / 1C / PRS 101 / PAO1).